The following is a 456-amino-acid chain: Adenylosuccinate lyase (456 aa).

N(6)-(1,2-dicarboxyethyl)-AMP-binding positions include 15 to 16 (RY), 90 to 92 (NHD), and 122 to 123 (TS). His-171 acts as the Proton donor/acceptor in catalysis. Gln-247 serves as a coordination point for N(6)-(1,2-dicarboxyethyl)-AMP. Ser-295 functions as the Proton donor/acceptor in the catalytic mechanism. N(6)-(1,2-dicarboxyethyl)-AMP contacts are provided by residues Ser-296, 301–303 (KVN), Asn-309, Arg-335, and 340–344 (STVLR).

This sequence belongs to the lyase 1 family. Adenylosuccinate lyase subfamily. Homotetramer. Residues from neighboring subunits contribute catalytic and substrate-binding residues to each active site.

It catalyses the reaction N(6)-(1,2-dicarboxyethyl)-AMP = fumarate + AMP. The catalysed reaction is (2S)-2-[5-amino-1-(5-phospho-beta-D-ribosyl)imidazole-4-carboxamido]succinate = 5-amino-1-(5-phospho-beta-D-ribosyl)imidazole-4-carboxamide + fumarate. The protein operates within purine metabolism; AMP biosynthesis via de novo pathway; AMP from IMP: step 2/2. Its pathway is purine metabolism; IMP biosynthesis via de novo pathway; 5-amino-1-(5-phospho-D-ribosyl)imidazole-4-carboxamide from 5-amino-1-(5-phospho-D-ribosyl)imidazole-4-carboxylate: step 2/2. In terms of biological role, catalyzes two reactions in de novo purine nucleotide biosynthesis. Catalyzes the breakdown of 5-aminoimidazole- (N-succinylocarboxamide) ribotide (SAICAR or 2-[5-amino-1-(5-phospho-beta-D-ribosyl)imidazole-4-carboxamido]succinate) to 5-aminoimidazole-4-carboxamide ribotide (AICAR or 5-amino-1-(5-phospho-beta-D-ribosyl)imidazole-4-carboxamide) and fumarate, and of adenylosuccinate (ADS or N(6)-(1,2-dicarboxyethyl)-AMP) to adenosine monophosphate (AMP) and fumarate. This Legionella pneumophila subsp. pneumophila (strain Philadelphia 1 / ATCC 33152 / DSM 7513) protein is Adenylosuccinate lyase (purB).